The sequence spans 75 residues: Porwaprin-d (75 aa).

Residues 1-24 (MSSGGLLLLLGLLTLWAELTPVSS) form the signal peptide. Residues 27–72 (RPKKPGLCPPRPQKPPCVRECKNDWRCPGEQKCCRYGCIYECRDPI) form the WAP domain. Disulfide bonds link cysteine 34/cysteine 60, cysteine 43/cysteine 64, cysteine 47/cysteine 59, and cysteine 53/cysteine 68.

It belongs to the venom waprin family. As to expression, expressed by the venom gland.

The protein localises to the secreted. Damages membranes of susceptible bacteria. Has no hemolytic activity. Not toxic to mice. Does not inhibit the proteinases elastase and cathepsin G. The chain is Porwaprin-d from Pseudechis porphyriacus (Red-bellied black snake).